Consider the following 269-residue polypeptide: 23S rRNA (adenosine(1067)-2'-O)-methyltransferase (269 aa).

S-adenosyl-L-methionine-binding residues include Arg135, Arg165, Leu195, Gly218, Ile238, and Leu247.

The protein belongs to the class IV-like SAM-binding methyltransferase superfamily. RNA methyltransferase TsnR/AvirB family. Homodimer.

The enzyme catalyses adenosine(1067) in 23S rRNA + S-adenosyl-L-methionine = 2'-O-methyladenosine(1067) in 23S rRNA + S-adenosyl-L-homocysteine + H(+). In terms of biological role, specifically methylates the adenosine-1067 in 23S ribosomal RNA. Confers resistance to antibiotic thiostrepton. In Streptomyces azureus, this protein is 23S rRNA (adenosine(1067)-2'-O)-methyltransferase (tsnR).